A 274-amino-acid polypeptide reads, in one-letter code: MAVIKCKPTSPGRRHVVKVVNTDLHKGKPFAALLAKKSKSGGRNNTGRITVRHVGGGHKQHYRLIDFKRNKDGIPAKVERIEYDPNRTAHIALVLYADGERRYILAAKGMKSGDPIQSGVGSEIKTGNSMPLRNIPVGSVVHAVEMKPGKGAQIARSAGAYVQVIARDGAYATLRLRSGEMRKVPVDCRATFGEVGNAEHMLRQLGKAGAKRWRGVRPTVRGVAMNPVDHPHGGGEGRTSGGRHPVSPWGVPTKGYKTRSNKRTDKYIVRRRNK.

The tract at residues 223 to 264 (VAMNPVDHPHGGGEGRTSGGRHPVSPWGVPTKGYKTRSNKRT) is disordered.

Belongs to the universal ribosomal protein uL2 family. In terms of assembly, part of the 50S ribosomal subunit. Forms a bridge to the 30S subunit in the 70S ribosome.

Its function is as follows. One of the primary rRNA binding proteins. Required for association of the 30S and 50S subunits to form the 70S ribosome, for tRNA binding and peptide bond formation. It has been suggested to have peptidyltransferase activity; this is somewhat controversial. Makes several contacts with the 16S rRNA in the 70S ribosome. This is Large ribosomal subunit protein uL2 from Shewanella denitrificans (strain OS217 / ATCC BAA-1090 / DSM 15013).